A 503-amino-acid polypeptide reads, in one-letter code: Cytochrome P450 714C1 (503 aa).

At 1 to 6 the chain is on the lumenal side; that stretch reads MEKLLA. Residues 7 to 27 form a helical; Signal-anchor for type III membrane protein membrane-spanning segment; the sequence is LIVVLVILLSLALFYLCNILW. Residues 28-503 lie on the Cytoplasmic side of the membrane; that stretch reads LRAVKIRKKL…GLPLMVTKLP (476 aa). C450 provides a ligand contact to heme.

It belongs to the cytochrome P450 family. Requires heme as cofactor.

It localises to the membrane. Its function is as follows. Probably not involved in gibberellin metabolism since over-expression of CYP714C1 in a heterologous system does not induce semi-dwarfism. The chain is Cytochrome P450 714C1 (CYP714C1) from Oryza sativa subsp. japonica (Rice).